A 306-amino-acid polypeptide reads, in one-letter code: Elongation factor Ts (306 aa).

The involved in Mg(2+) ion dislocation from EF-Tu stretch occupies residues 80 to 83; the sequence is TDFV.

The protein belongs to the EF-Ts family.

The protein localises to the cytoplasm. In terms of biological role, associates with the EF-Tu.GDP complex and induces the exchange of GDP to GTP. It remains bound to the aminoacyl-tRNA.EF-Tu.GTP complex up to the GTP hydrolysis stage on the ribosome. The protein is Elongation factor Ts of Leptothrix cholodnii (strain ATCC 51168 / LMG 8142 / SP-6) (Leptothrix discophora (strain SP-6)).